The following is a 343-amino-acid chain: Methionine import ATP-binding protein MetN 1 (343 aa).

The ABC transporter domain occupies 2–241; it reads IKLSNITKVF…PKTPLAQKFI (240 aa). 38 to 45 contributes to the ATP binding site; that stretch reads GASGAGKS.

This sequence belongs to the ABC transporter superfamily. Methionine importer (TC 3.A.1.24) family. In terms of assembly, the complex is composed of two ATP-binding proteins (MetN), two transmembrane proteins (MetI) and a solute-binding protein (MetQ).

It is found in the cell inner membrane. It catalyses the reaction L-methionine(out) + ATP + H2O = L-methionine(in) + ADP + phosphate + H(+). The catalysed reaction is D-methionine(out) + ATP + H2O = D-methionine(in) + ADP + phosphate + H(+). Part of the ABC transporter complex MetNIQ involved in methionine import. Responsible for energy coupling to the transport system. The sequence is that of Methionine import ATP-binding protein MetN 1 from Salmonella paratyphi A (strain ATCC 9150 / SARB42).